Reading from the N-terminus, the 182-residue chain is Inner membrane-spanning protein YciB (182 aa).

The next 5 membrane-spanning stretches (helical) occupy residues 20-42 (GGIY…WVYY), 55-75 (LIMI…TFIL), 76-96 (LKPT…AQFF), 123-143 (LNLA…YIAF), and 153-173 (FKLF…GFWM).

Belongs to the YciB family.

The protein localises to the cell inner membrane. Its function is as follows. Plays a role in cell envelope biogenesis, maintenance of cell envelope integrity and membrane homeostasis. This is Inner membrane-spanning protein YciB from Polynucleobacter asymbioticus (strain DSM 18221 / CIP 109841 / QLW-P1DMWA-1) (Polynucleobacter necessarius subsp. asymbioticus).